Here is a 195-residue protein sequence, read N- to C-terminus: 3-isopropylmalate dehydratase small subunit (195 aa).

Belongs to the LeuD family. LeuD type 1 subfamily. In terms of assembly, heterodimer of LeuC and LeuD.

It carries out the reaction (2R,3S)-3-isopropylmalate = (2S)-2-isopropylmalate. It functions in the pathway amino-acid biosynthesis; L-leucine biosynthesis; L-leucine from 3-methyl-2-oxobutanoate: step 2/4. In terms of biological role, catalyzes the isomerization between 2-isopropylmalate and 3-isopropylmalate, via the formation of 2-isopropylmaleate. The polypeptide is 3-isopropylmalate dehydratase small subunit (Corynebacterium kroppenstedtii (strain DSM 44385 / JCM 11950 / CIP 105744 / CCUG 35717)).